A 464-amino-acid chain; its full sequence is L-cystine uptake protein TcyP (464 aa).

A run of 10 helical transmembrane segments spans residues 3 to 23 (TLLV…LYYM), 34 to 54 (VFTA…IYEP), 73 to 93 (YVKL…ISAF), 107 to 127 (GLII…GIAA), 184 to 204 (PTST…FIGV), 225 to 245 (IVMR…LALM), 263 to 283 (FVLA…LLIA), 347 to 367 (AGIY…IDPL), 371 to 391 (FILT…GVGG), and 395 to 415 (FAAL…ALVI).

The protein belongs to the dicarboxylate/amino acid:cation symporter (DAACS) (TC 2.A.23) family.

Its subcellular location is the membrane. Its function is as follows. Mediates uptake of L-cystine, the oxidized form of L-cysteine. In Bacillus thuringiensis subsp. konkukian (strain 97-27), this protein is L-cystine uptake protein TcyP.